Reading from the N-terminus, the 333-residue chain is L-lactate dehydrogenase B chain (333 aa).

Residues 29 to 57 (GQVG…LEDK) and Arg-99 contribute to the NAD(+) site. Substrate is bound by residues Arg-106, Asn-138, and Arg-169. An NAD(+)-binding site is contributed by Asn-138. Catalysis depends on His-193, which acts as the Proton acceptor. Substrate is bound at residue Thr-248.

It belongs to the LDH/MDH superfamily. LDH family. Homotetramer.

Its subcellular location is the cytoplasm. It catalyses the reaction (S)-lactate + NAD(+) = pyruvate + NADH + H(+). It participates in fermentation; pyruvate fermentation to lactate; (S)-lactate from pyruvate: step 1/1. Functionally, interconverts simultaneously and stereospecifically pyruvate and lactate with concomitant interconversion of NADH and NAD(+). The sequence is that of L-lactate dehydrogenase B chain (LDHB) from Caiman crocodilus apaporiensis (Rio Apaporis caiman).